The following is a 320-amino-acid chain: Methyltransferase gedG (320 aa).

Residues 61–154 form a methyltransferase domain region; the sequence is DAGAGNGVYS…QLRPGGTFAC (94 aa). Residues 231 to 252 are disordered; sequence GLLPPERRGEVTEPDHEGPHDQ. Positions 235 to 252 are enriched in basic and acidic residues; it reads PERRGEVTEPDHEGPHDQ.

This sequence belongs to the methyltransferase superfamily.

Its pathway is secondary metabolite biosynthesis. Methyltransferase; part of the gene cluster that mediates the biosynthesis of geodin, an intermediate in the biosynthesis of other natural products. The pathway begins with the synthesis of atrochrysone thioester by the polyketide synthase (PKS) gedC. The atrochrysone carboxyl ACP thioesterase gedB then breaks the thioester bond and releases the atrochrysone carboxylic acid from gedC. The atrochrysone carboxylic acid is then converted to atrochrysone which is further transformed into emodinanthrone. The next step is performed by the emodinanthrone oxygenase gedH that catalyzes the oxidation of emodinanthrone to emodin. Emodin O-methyltransferase encoded probably by gedA then catalyzes methylation of the 8-hydroxy group of emodin to form questin. Ring cleavage of questin by questin oxidase gedK leads to desmethylsulochrin via several intermediates including questin epoxide. Another methylation step probably catalyzed by methyltransferase gedG leads to the formation of sulochrin which is further converted to dihydrogeodin by the sulochrin halogenase gedL. Finally, the dihydrogeodin oxidase gedJ catalyzes the stereospecific phenol oxidative coupling reaction converting dihydrogeodin to geodin. This chain is Methyltransferase gedG, found in Aspergillus terreus (strain NIH 2624 / FGSC A1156).